Reading from the N-terminus, the 340-residue chain is Heat-inducible transcription repressor HrcA (340 aa).

Belongs to the HrcA family.

Its function is as follows. Negative regulator of class I heat shock genes (grpE-dnaK-dnaJ and groELS operons). Prevents heat-shock induction of these operons. The chain is Heat-inducible transcription repressor HrcA from Chromobacterium violaceum (strain ATCC 12472 / DSM 30191 / JCM 1249 / CCUG 213 / NBRC 12614 / NCIMB 9131 / NCTC 9757 / MK).